The chain runs to 396 residues: Capsular polysaccharide biosynthesis protein CapF (396 aa).

12 helical membrane-spanning segments follow: residues 7–27, 41–61, 74–94, 101–121, 129–149, 153–173, 198–218, 232–252, 279–299, 315–335, 351–371, and 372–392; these read YMFVANILSALCKFLILLVIV, ALVITAPIFLFISLKIRSVIV, AILSLNIITLIFVAIFVYVLG, ILIVSLIKLFENIKEVPYGIY, LLGISMGIYNILSLILFYIIY, HNLNMALLFLVISCIFSFAII, IFILTIPLAFSSALGSLNTGI, LGIFSTIAYVLVIGGLFANSI, MVFIGIFIGMCSVILSLFLGE, IILIILSFGLLFILSGIFLGT, LILLFCILIFSFLLIPKYSLL, and GAALTITISQFVALISYYYFY.

This sequence belongs to the polysaccharide synthase family.

Its subcellular location is the cell membrane. The protein operates within capsule biogenesis; capsule polysaccharide biosynthesis. In terms of biological role, required for the biosynthesis of type 1 capsular polysaccharide. The polypeptide is Capsular polysaccharide biosynthesis protein CapF (capF) (Staphylococcus aureus).